Here is a 462-residue protein sequence, read N- to C-terminus: Flavin-containing monooxygenase FMO GS-OX3 (462 aa).

Residue 17–22 (GAGPAG) participates in FAD binding. 212–217 (GNFASG) serves as a coordination point for NADP(+). A helical transmembrane segment spans residues 318–338 (ALAPGLAFVGLPAMGIVFVMF).

The protein belongs to the FMO family.

The protein localises to the membrane. It carries out the reaction a (Z)-omega-(methylsulfanyl)-N-sulfo-alkylhydroximate S-glucoside + NADPH + O2 + H(+) = a (Z)-omega-(methylsulfinyl)-alkyl-glucosinolate + NADP(+) + H2O. Catalyzes the conversion of methylthioalkyl glucosinolates of any chain length into methylsulfinylalkyl glucosinolates. Prefers probably short-chain methylthioalkyl glucosinolates in cv. Landsberg erecta. This Arabidopsis thaliana (Mouse-ear cress) protein is Flavin-containing monooxygenase FMO GS-OX3 (FMOGS-OX3).